The sequence spans 432 residues: ATP-dependent RNA helicase RhlB (432 aa).

Residues 9–37 (KKFSDFALHPKVIEALEKKGFSNCTQIQA) carry the Q motif motif. Positions 40–219 (LPITVKGHDI…FEQMNNPEYV (180 aa)) constitute a Helicase ATP-binding domain. An ATP-binding site is contributed by 53–60 (AQTGTGKT). The DEAD box motif lies at 165–168 (DEAD). The region spanning 245–390 (RLLQTLIEEE…VSKYNSDALL (146 aa)) is the Helicase C-terminal domain. Positions 393–432 (LPEPKRRHRPRQGQPRRNNSAPRRGNNTQRNNRNKRPSHS) are disordered. The span at 404–423 (QGQPRRNNSAPRRGNNTQRN) shows a compositional bias: low complexity.

The protein belongs to the DEAD box helicase family. RhlB subfamily. As to quaternary structure, component of the RNA degradosome, which is a multiprotein complex involved in RNA processing and mRNA degradation.

It localises to the cytoplasm. It catalyses the reaction ATP + H2O = ADP + phosphate + H(+). Functionally, DEAD-box RNA helicase involved in RNA degradation. Has RNA-dependent ATPase activity and unwinds double-stranded RNA. This Proteus mirabilis (strain HI4320) protein is ATP-dependent RNA helicase RhlB.